Consider the following 105-residue polypeptide: Large ribosomal subunit protein uL24 (105 aa).

This sequence belongs to the universal ribosomal protein uL24 family. Part of the 50S ribosomal subunit.

One of two assembly initiator proteins, it binds directly to the 5'-end of the 23S rRNA, where it nucleates assembly of the 50S subunit. Its function is as follows. One of the proteins that surrounds the polypeptide exit tunnel on the outside of the subunit. The polypeptide is Large ribosomal subunit protein uL24 (Acinetobacter baumannii (strain AB307-0294)).